A 375-amino-acid chain; its full sequence is Alanine racemase (375 aa).

The active-site Proton acceptor; specific for D-alanine is K35. At K35 the chain carries N6-(pyridoxal phosphate)lysine. R133 contributes to the substrate binding site. The active-site Proton acceptor; specific for L-alanine is Y261. M309 serves as a coordination point for substrate.

This sequence belongs to the alanine racemase family. Requires pyridoxal 5'-phosphate as cofactor.

It catalyses the reaction L-alanine = D-alanine. The protein operates within amino-acid biosynthesis; D-alanine biosynthesis; D-alanine from L-alanine: step 1/1. In terms of biological role, catalyzes the interconversion of L-alanine and D-alanine. May also act on other amino acids. The protein is Alanine racemase (alr) of Syntrophobacter fumaroxidans (strain DSM 10017 / MPOB).